Here is a 676-residue protein sequence, read N- to C-terminus: Pre-mRNA-splicing factor clf1 (676 aa).

HAT repeat units follow at residues 52 to 84 (EYQG…WELE), 86 to 118 (KEFR…SEMR), 120 to 152 (RNIN…MEET), 154 to 185 (GNIQ…LEKR), 187 to 218 (NEFE…FEEE), 220 to 255 (GTSD…FEAK), 257 to 291 (KEYE…FEKQ), 301 to 333 (VILS…LEET), 335 to 369 (GDPD…LWIF), 379 to 415 (KDVD…FDIR), 417 to 448 (MDLQ…LERQ), 450 to 482 (FEFV…LERG), 484 to 518 (DDSE…FEEY), and 520 to 551 (GEYD…FEIN). Residues 554–566 (EEEEEEEEEEEEE) show a composition bias toward acidic residues. The disordered stretch occupies residues 554 to 573 (EEEEEEEEEEEEERPVSDEA). An HAT 15 repeat occupies 572–610 (EAKRRARAVFERAHKVFKEKEMKEERVELLNAWRAFEHT).

It belongs to the crooked-neck family. In terms of assembly, associated with the spliceosome.

Its subcellular location is the nucleus. Involved in pre-mRNA splicing and cell cycle progression. Required for the spliceosome assembly and initiation of the DNA replication. In Aspergillus fumigatus (strain ATCC MYA-4609 / CBS 101355 / FGSC A1100 / Af293) (Neosartorya fumigata), this protein is Pre-mRNA-splicing factor clf1 (clf1).